Consider the following 208-residue polypeptide: Sec-independent protein translocase protein TatB (208 aa).

A helical transmembrane segment spans residues 1-21 (MFDIGVGELTLIAVVALVVLG). Over residues 178–189 (APEPVAVAPVDA) the composition is skewed to low complexity. The disordered stretch occupies residues 178–208 (APEPVAVAPVDAGTPAAWTPSAPAKLQEKQP).

The protein belongs to the TatB family. The Tat system comprises two distinct complexes: a TatABC complex, containing multiple copies of TatA, TatB and TatC subunits, and a separate TatA complex, containing only TatA subunits. Substrates initially bind to the TatABC complex, which probably triggers association of the separate TatA complex to form the active translocon.

It localises to the cell inner membrane. Part of the twin-arginine translocation (Tat) system that transports large folded proteins containing a characteristic twin-arginine motif in their signal peptide across membranes. Together with TatC, TatB is part of a receptor directly interacting with Tat signal peptides. TatB may form an oligomeric binding site that transiently accommodates folded Tat precursor proteins before their translocation. This Xanthomonas euvesicatoria pv. vesicatoria (strain 85-10) (Xanthomonas campestris pv. vesicatoria) protein is Sec-independent protein translocase protein TatB.